Consider the following 239-residue polypeptide: 7-cyano-7-deazaguanine synthase (239 aa).

13-23 contacts ATP; sequence LSGGLDSMVTA. Zn(2+)-binding residues include C193, C203, C206, and C209.

Belongs to the QueC family. Zn(2+) is required as a cofactor.

The catalysed reaction is 7-carboxy-7-deazaguanine + NH4(+) + ATP = 7-cyano-7-deazaguanine + ADP + phosphate + H2O + H(+). It participates in purine metabolism; 7-cyano-7-deazaguanine biosynthesis. Its function is as follows. Catalyzes the ATP-dependent conversion of 7-carboxy-7-deazaguanine (CDG) to 7-cyano-7-deazaguanine (preQ(0)). The protein is 7-cyano-7-deazaguanine synthase of Erythrobacter litoralis (strain HTCC2594).